An 823-amino-acid polypeptide reads, in one-letter code: Putative ankyrin repeat domain-containing protein 20A2 (823 aa).

5 ANK repeats span residues 66-95 (QHRT…QIDV), 99-128 (ENRT…NPNL), 132-161 (YGNT…HIEA), 165-194 (DNNT…SSHA), and 198-227 (LRRS…DVFA). 2 disordered regions span residues 301-343 (VPEK…EVED) and 355-402 (VQTL…LSEN). Positions 372 to 384 (QERHERSEKKQPQ) are enriched in basic and acidic residues. Coiled coils occupy residues 431–480 (KKLK…KQLE), 565–724 (EMIT…NNST), and 776–805 (LVLE…EKTE).

The sequence is that of Putative ankyrin repeat domain-containing protein 20A2 from Homo sapiens (Human).